A 130-amino-acid chain; its full sequence is Fluoride-specific ion channel FluC (130 aa).

4 consecutive transmembrane segments (helical) span residues Gly-2–Leu-22, Gly-36–Ile-56, Phe-71–Ile-91, and Ile-100–Leu-120. Residues Gly-79 and Thr-82 each coordinate Na(+).

This sequence belongs to the fluoride channel Fluc/FEX (TC 1.A.43) family.

The protein resides in the cell inner membrane. It carries out the reaction fluoride(in) = fluoride(out). Its activity is regulated as follows. Na(+) is not transported, but it plays an essential structural role and its presence is essential for fluoride channel function. Functionally, fluoride-specific ion channel. Important for reducing fluoride concentration in the cell, thus reducing its toxicity. The sequence is that of Fluoride-specific ion channel FluC from Francisella tularensis subsp. tularensis (strain FSC 198).